The chain runs to 135 residues: Ribonuclease P protein component (135 aa).

This sequence belongs to the RnpA family. In terms of assembly, consists of a catalytic RNA component (M1 or rnpB) and a protein subunit.

It carries out the reaction Endonucleolytic cleavage of RNA, removing 5'-extranucleotides from tRNA precursor.. RNaseP catalyzes the removal of the 5'-leader sequence from pre-tRNA to produce the mature 5'-terminus. It can also cleave other RNA substrates such as 4.5S RNA. The protein component plays an auxiliary but essential role in vivo by binding to the 5'-leader sequence and broadening the substrate specificity of the ribozyme. The sequence is that of Ribonuclease P protein component from Xylella fastidiosa (strain 9a5c).